A 188-amino-acid chain; its full sequence is Large ribosomal subunit protein eL18 (188 aa).

The interval 143–188 is disordered; sequence RSAREAEKHFGPAPGVPHSHTKPHVRSKGRKFERARGRRASRAYKN. 2 stretches are compositionally biased toward basic residues: residues 161–171 and 178–188; these read SHTKPHVRSKG and RGRRASRAYKN.

The protein belongs to the eukaryotic ribosomal protein eL18 family.

Its subcellular location is the cytoplasm. In Caenorhabditis briggsae, this protein is Large ribosomal subunit protein eL18 (rpl-18).